The chain runs to 330 residues: 2-methoxy-6-polyprenyl-1,4-benzoquinol methylase, mitochondrial (330 aa).

A mitochondrion-targeting transit peptide spans 1–42 (MAAPRSWALWSFCGCGWSRAVSGCRLPGLRSSSPRGPLGARL). Residues Thr117, Asp171, and 199–200 (DA) contribute to the S-adenosyl-L-methionine site.

Belongs to the class I-like SAM-binding methyltransferase superfamily. MenG/UbiE family. As to quaternary structure, component of a multi-subunit COQ enzyme complex, composed of at least COQ3, COQ4, COQ5, COQ6, COQ7 and COQ9. Interacts with PYURF; the interaction is direct, stabilizes COQ5 protein and associates PYURF with COQ enzyme complex.

Its subcellular location is the mitochondrion inner membrane. It carries out the reaction 2-methoxy-6-(all-trans-decaprenyl)benzene-1,4-diol + S-adenosyl-L-methionine = 5-methoxy-2-methyl-3-(all-trans-decaprenyl)benzene-1,4-diol + S-adenosyl-L-homocysteine + H(+). The protein operates within cofactor biosynthesis; ubiquinone biosynthesis. In terms of biological role, methyltransferase required for the conversion of 2-decaprenyl-6-methoxy-1,4-benzoquinol (DDMQH2) to 2-decaprenyl-3-methyl-6-methoxy-1,4-benzoquinol (DMQH2). The protein is 2-methoxy-6-polyprenyl-1,4-benzoquinol methylase, mitochondrial of Bos taurus (Bovine).